The following is a 301-amino-acid chain: Transcription elongation factor A protein 1 (301 aa).

Met1 is subject to N-acetylmethionine. Residues 3 to 80 (DEVIRIAKKM…KSWKKLLDGP (78 aa)) form the TFIIS N-terminal domain. A Glycyl lysine isopeptide (Lys-Gly) (interchain with G-Cter in ubiquitin) cross-link involves residue Lys55. Ser57, Ser81, Ser97, and Ser100 each carry phosphoserine. The span at 76–93 (LLDGPSTDKDSEEKKKDT) shows a compositional bias: basic and acidic residues. Residues 76–139 (LLDGPSTDKD…FPRAPSTSDS (64 aa)) form a disordered region. Positions 140–256 (VRLKCREMLA…EHQMAKTGGT (117 aa)) constitute a TFIIS central domain. Residues 259-299 (DLFTCGKCKKKNCTYTQVQTRSADEPMTTFVVCNECGNRWK) form a TFIIS-type zinc finger. Zn(2+) is bound by residues Cys263, Cys266, Cys291, and Cys294.

Belongs to the TFS-II family. As to quaternary structure, interacts with EAF2. Associates with UBR5 and forms a transcription regulatory complex made of CDK9, Pol II, UBR5 and TCEA1/TFIIS. Part of TBP-based Pol II pre-initiation complex (PIC), in which Pol II core assembles with general transcription factors and other specific initiation factors including GTF2E1, GTF2E2, GTF2F1, GTF2F2, TCEA1, ERCC2, ERCC3, GTF2H2, GTF2H3, GTF2H4, GTF2H5, GTF2A1, GTF2A2, GTF2B and TBP; this large multi-subunit PIC complex mediates DNA unwinding and targets Pol II core to the transcription start site where the first phosphodiester bond forms.

Its subcellular location is the nucleus. Its function is as follows. Necessary for efficient RNA polymerase II transcription elongation past template-encoded arresting sites. The arresting sites in DNA have the property of trapping a certain fraction of elongating RNA polymerases that pass through, resulting in locked ternary complexes. Cleavage of the nascent transcript by S-II allows the resumption of elongation from the new 3'-terminus. This is Transcription elongation factor A protein 1 (TCEA1) from Bos taurus (Bovine).